Here is a 311-residue protein sequence, read N- to C-terminus: Protoheme IX farnesyltransferase (311 aa).

8 helical membrane passes run 19–39 (VLAYIALTKPRVIELLLVATI), 55–75 (ILATLFGGWMGAASANTLNCV), 101–121 (NAFVFGVVLGLASFAWLWWQA), 123–143 (LLSGALVVATILFYVFVYTLG), 169–189 (AVTGTIGWPALALFGVIFFWT), 221–241 (VTKQIVIYTWLTVLTTLALVP), 242–262 (ATGVIYAAVALVAGAWFLLMA), and 290–310 (VVFCGLAVDSVLGWDTIGSFF).

It belongs to the UbiA prenyltransferase family. Protoheme IX farnesyltransferase subfamily.

It is found in the cell membrane. The catalysed reaction is heme b + (2E,6E)-farnesyl diphosphate + H2O = Fe(II)-heme o + diphosphate. It participates in porphyrin-containing compound metabolism; heme O biosynthesis; heme O from protoheme: step 1/1. In terms of biological role, converts heme B (protoheme IX) to heme O by substitution of the vinyl group on carbon 2 of heme B porphyrin ring with a hydroxyethyl farnesyl side group. In Nocardia farcinica (strain IFM 10152), this protein is Protoheme IX farnesyltransferase.